We begin with the raw amino-acid sequence, 243 residues long: MRKPVIAGNWKMHMTCAQTRDWMGTFLPLISETPDDRHLVIAPPFTAISTLADVGAGSRVEISSQNVHWEGHGAYTGEISPAMLQEHGVRYAIVGHSEPRKYFSESDEQINHRARSAQAHDLIPIVCVGESDEQRSRGEAERVIRRQVEQGLEGLDPQRLVVAYEPIWAIGTGKTCESAEANRICGLIRSWVGSPDLIIQYGGSVKPANIDELMGMSDIDGVLVGGASLDPEGFARIANYKKG.

Substrate is bound at residue 9–11 (NWK). The active-site Electrophile is the H96. E165 serves as the catalytic Proton acceptor. Substrate is bound by residues G171, S204, and 225 to 226 (GG).

It belongs to the triosephosphate isomerase family. Homodimer.

The protein localises to the cytoplasm. It carries out the reaction D-glyceraldehyde 3-phosphate = dihydroxyacetone phosphate. Its pathway is carbohydrate biosynthesis; gluconeogenesis. The protein operates within carbohydrate degradation; glycolysis; D-glyceraldehyde 3-phosphate from glycerone phosphate: step 1/1. In terms of biological role, involved in the gluconeogenesis. Catalyzes stereospecifically the conversion of dihydroxyacetone phosphate (DHAP) to D-glyceraldehyde-3-phosphate (G3P). In Synechococcus sp. (strain WH7803), this protein is Triosephosphate isomerase.